Reading from the N-terminus, the 334-residue chain is NAD-dependent protein deacylase sirtuin-6 (334 aa).

Residue serine 2 is modified to N-acetylserine. The residue at position 10 (serine 10) is a Phosphoserine. The region spanning 27-272 (PEELERKVWE…CRLMKHLGLE (246 aa)) is the Deacetylase sirtuin-type domain. An N6-acetyllysine modification is found at lysine 33. Alanine 53, threonine 57, phenylalanine 64, arginine 65, tryptophan 71, glutamine 113, and histidine 133 together coordinate NAD(+). The active-site Proton acceptor is the histidine 133. The Zn(2+) site is built by cysteine 141, cysteine 144, and cysteine 166. A Glycyl lysine isopeptide (Lys-Gly) (interchain with G-Cter in ubiquitin) cross-link involves residue lysine 170. Residue cysteine 177 participates in Zn(2+) binding. NAD(+) contacts are provided by glycine 214, serine 216, asparagine 240, glutamine 242, and valine 258. Positions 312–334 (KSKPNSPILHRPPKRVKTEAAPS) are disordered.

Belongs to the sirtuin family. Class IV subfamily. Homodimer; binds to nucleosomes and DNA ends as a homodimer. Interacts with RELA; interferes with RELA binding to target DNA. Interacts with SMARCA5; promoting recruitment of SMARCA5/SNF2H to double-strand breaks (DSBs) sites. Interacts with the mTORC2 complex; preventing the ability of SIRT6 to deacetylate FOXO1. Interacts with the CLOCK-BMAL1 complex; recruited by the CLOCK-BMAL1 complex to regulate expression of clock-controlled genes. Interacts with CSNK2A2; preventing CSNK2A2 localization to the nucleus. Zn(2+) serves as cofactor. Acetylated at Lys-33. Deacetylation at Lys-33 by SIRT1 promotes homomultimerization and binding to double-strand breaks (DSBs) sites. Post-translationally, phosphorylation at Ser-10 by MAPK8/JNK1 in response to oxidative stress stimulates the mono-ADP-ribosyltransferase activity on PARP1, leading to PARP1 recruitment to double-strand breaks (DSBs). In terms of processing, monoubiquitinated at Lys-170 by STUB1/CHIP, preventing its degradation by the proteasome. Sumoylated, leading to specifically decrease ability to deacetylate histone H3 at 'Lys-56' (H3K56ac). Highest levels are found in muscle, thymus, spleen, brain and heart (at protein level).

The protein resides in the nucleus. It is found in the chromosome. Its subcellular location is the telomere. The protein localises to the endoplasmic reticulum. It catalyses the reaction N(6)-acetyl-L-lysyl-[protein] + NAD(+) + H2O = 2''-O-acetyl-ADP-D-ribose + nicotinamide + L-lysyl-[protein]. It carries out the reaction N(6)-tetradecanoyl-L-lysyl-[protein] + NAD(+) + H2O = 2''-O-tetradecanoyl-ADP-D-ribose + nicotinamide + L-lysyl-[protein]. The catalysed reaction is N(6)-hexadecanoyl-L-lysyl-[protein] + NAD(+) + H2O = 2''-O-hexadecanoyl-ADP-D-ribose + nicotinamide + L-lysyl-[protein]. The enzyme catalyses L-lysyl-[protein] + NAD(+) = N(6)-(ADP-D-ribosyl)-L-lysyl-[protein] + nicotinamide + H(+). It catalyses the reaction L-arginyl-[protein] + NAD(+) = N(omega)-(ADP-D-ribosyl)-L-arginyl-[protein] + nicotinamide + H(+). Its activity is regulated as follows. Compared to the defatty-acylase activity, the protein deacetylase activity is weak in vitro, and requires activation. The histone deacetylase activity is strongly activated upon binding to nucleosomes and chromatin in vivo. Two molecules of SIRT6 associate with the acidic patch of one nucleosome, while the C-terminal disordered region of SIRT6 associates with nucleosomal DNA, leading to efficient histone deacetylation. The protein-lysine deacetylase activity is also activated by long-chain free fatty-acids. Its function is as follows. NAD-dependent protein deacetylase, deacylase and mono-ADP-ribosyltransferase that plays an essential role in DNA damage repair, telomere maintenance, metabolic homeostasis, inflammation, tumorigenesis and aging. Displays protein-lysine deacetylase or defatty-acylase (demyristoylase and depalmitoylase) activity, depending on the context. Acts as a key histone deacetylase by catalyzing deacetylation of histone H3 at 'Lys-9', 'Lys-18' and 'Lys-56' (H3K9ac, H3K18ac and H3K56ac, respectively), suppressing target gene expression of several transcription factors, including NF-kappa-B. Acts as an inhibitor of transcription elongation by mediating deacetylation of H3K9ac and H3K56ac, preventing release of NELFE from chromatin and causing transcriptional pausing. Involved in DNA repair by promoting double-strand break (DSB) repair: acts as a DSB sensor by recognizing and binding DSB sites, leading to (1) recruitment of DNA repair proteins, such as SMARCA5/SNF2H, and (2) deacetylation of histone H3K9ac and H3K56ac. SIRT6 participation to DSB repair is probably involved in extension of life span. Also promotes DNA repair by deacetylating non-histone proteins, such as DDB2 and p53/TP53. Specifically deacetylates H3K18ac at pericentric heterochromatin, thereby maintaining pericentric heterochromatin silencing at centromeres and protecting against genomic instability and cellular senescence. Involved in telomere maintenance by catalyzing deacetylation of histone H3 in telomeric chromatin, regulating telomere position effect and telomere movement in response to DNA damage. Required for embryonic stem cell differentiation by mediating histone deacetylation of H3K9ac. Plays a major role in metabolism by regulating processes such as glycolysis, gluconeogenesis, insulin secretion and lipid metabolism. Inhibits glycolysis via histone deacetylase activity and by acting as a corepressor of the transcription factor HIF1A, thereby controlling the expression of multiple glycolytic genes. Has tumor suppressor activity by repressing glycolysis, thereby inhibiting the Warburg effect. Also regulates glycolysis and tumorigenesis by mediating deacetylation and nuclear export of non-histone proteins, such as isoform M2 of PKM (PKM2). Acts as a negative regulator of gluconeogenesis by mediating deacetylation of non-histone proteins, such as FOXO1 and KAT2A/GCN5. Promotes beta-oxidation of fatty acids during fasting by catalyzing deacetylation of NCOA2, inducing coactivation of PPARA. Acts as a regulator of lipid catabolism in brown adipocytes, both by catalyzing deacetylation of histones and non-histone proteins, such as FOXO1. Also acts as a regulator of circadian rhythms, both by regulating expression of clock-controlled genes involved in lipid and carbohydrate metabolism, and by catalyzing deacetylation of PER2. The defatty-acylase activity is specifically involved in regulation of protein secretion. Has high activity toward long-chain fatty acyl groups and mediates protein-lysine demyristoylation and depalmitoylation of target proteins, such as RRAS2 and TNF, thereby regulating their secretion. Also acts as a mono-ADP-ribosyltransferase by mediating mono-ADP-ribosylation of PARP1, TRIM28/KAP1 or SMARCC2/BAF170. Mono-ADP-ribosyltransferase activity is involved in DNA repair, cellular senescence, repression of LINE-1 retrotransposon elements and regulation of transcription. The protein is NAD-dependent protein deacylase sirtuin-6 of Mus musculus (Mouse).